The chain runs to 311 residues: Transcription factor MafB (311 aa).

Disordered regions lie at residues 35–78 and 150–199; these read PLGR…PTEQ and EDLA…EDRF. Low complexity predominate over residues 54–76; sequence SVSSTPISTPCSSVPSSPSFSPT. Basic residues predominate over residues 157–167; it reads HPHHHHHHHHQ. The span at 168–194 shows a compositional bias: low complexity; it reads ASPTPSTSSSSSQQLQTSHQQHPPSSS. The segment at 226-251 is basic motif; it reads RLKQKRRTLKNRGYAQSCRYKRVQQK. Residues 226 to 289 form the bZIP domain; that stretch reads RLKQKRRTLK…DAYKLKCEKL (64 aa). The interval 254–275 is leucine-zipper; sequence LENEKTQLIQQVEQLKQEVTRL.

The protein belongs to the bZIP family. Maf subfamily. As to quaternary structure, homodimer or heterodimer with other bHLH-Zip transcription factors. Binds DNA as a homodimer or heterodimer. Self-associates; the interaction requires the intact MAFB leucine-zipper domain. Interacts with FOS, HOXD12 and PRRX1. Expressed in brain, thymus, gut, lung, mesenterium, spleen, kidney, ovary and bursa.

It is found in the nucleus. Acts as a transcriptional activator or repressor. Positively regulates the expression of alpha-A crystallin genes during lens fiber cell differentiation. Binds to Maf recognition elements (MARE). This chain is Transcription factor MafB (MAFB), found in Gallus gallus (Chicken).